A 144-amino-acid chain; its full sequence is Large ribosomal subunit protein uL16 (144 aa).

This sequence belongs to the universal ribosomal protein uL16 family. Part of the 50S ribosomal subunit.

Its function is as follows. Binds 23S rRNA and is also seen to make contacts with the A and possibly P site tRNAs. The chain is Large ribosomal subunit protein uL16 from Bacillus mycoides (strain KBAB4) (Bacillus weihenstephanensis).